The sequence spans 183 residues: Endoribonuclease YbeY (183 aa).

His142, His146, and His152 together coordinate Zn(2+).

It belongs to the endoribonuclease YbeY family. Requires Zn(2+) as cofactor.

Its subcellular location is the cytoplasm. Its function is as follows. Single strand-specific metallo-endoribonuclease involved in late-stage 70S ribosome quality control and in maturation of the 3' terminus of the 16S rRNA. In Trichodesmium erythraeum (strain IMS101), this protein is Endoribonuclease YbeY.